Reading from the N-terminus, the 267-residue chain is Undecaprenyl-diphosphatase (267 aa).

A run of 8 helical transmembrane segments spans residues 4–24 (ILII…PISS), 41–61 (NIQN…ILLF), 84–104 (ILIL…GFMF), 116–136 (YISY…FISL), 160–180 (CFSL…GLIL), 185–205 (YVLF…VLIL), 216–236 (ENIF…LIFG), and 246–266 (TSLI…LFTC).

Belongs to the UppP family.

The protein resides in the cell membrane. The catalysed reaction is di-trans,octa-cis-undecaprenyl diphosphate + H2O = di-trans,octa-cis-undecaprenyl phosphate + phosphate + H(+). Functionally, catalyzes the dephosphorylation of undecaprenyl diphosphate (UPP). Confers resistance to bacitracin. The sequence is that of Undecaprenyl-diphosphatase from Wigglesworthia glossinidia brevipalpis.